A 331-amino-acid chain; its full sequence is Glucokinase (331 aa).

13-18 (GDIGGT) is an ATP binding site.

This sequence belongs to the bacterial glucokinase family.

Its subcellular location is the cytoplasm. The enzyme catalyses D-glucose + ATP = D-glucose 6-phosphate + ADP + H(+). This Caulobacter vibrioides (strain ATCC 19089 / CIP 103742 / CB 15) (Caulobacter crescentus) protein is Glucokinase.